Reading from the N-terminus, the 250-residue chain is 5'-nucleotidase SurE (250 aa).

A divalent metal cation is bound by residues D8, D9, S39, and N91.

Belongs to the SurE nucleotidase family. It depends on a divalent metal cation as a cofactor.

It is found in the cytoplasm. It carries out the reaction a ribonucleoside 5'-phosphate + H2O = a ribonucleoside + phosphate. Nucleotidase that shows phosphatase activity on nucleoside 5'-monophosphates. The sequence is that of 5'-nucleotidase SurE from Leptospira borgpetersenii serovar Hardjo-bovis (strain L550).